Reading from the N-terminus, the 270-residue chain is Tryptophan synthase alpha chain (270 aa).

Residues Glu49 and Asp60 each act as proton acceptor in the active site.

The protein belongs to the TrpA family. As to quaternary structure, tetramer of two alpha and two beta chains.

The catalysed reaction is (1S,2R)-1-C-(indol-3-yl)glycerol 3-phosphate + L-serine = D-glyceraldehyde 3-phosphate + L-tryptophan + H2O. Its pathway is amino-acid biosynthesis; L-tryptophan biosynthesis; L-tryptophan from chorismate: step 5/5. Functionally, the alpha subunit is responsible for the aldol cleavage of indoleglycerol phosphate to indole and glyceraldehyde 3-phosphate. This Pseudomonas fluorescens (strain Pf0-1) protein is Tryptophan synthase alpha chain.